We begin with the raw amino-acid sequence, 256 residues long: Enolase-phosphatase E1 (256 aa).

Mg(2+)-binding residues include Asp-14 and Glu-16. Substrate-binding positions include 142-143 (SS) and Lys-176. Asp-201 lines the Mg(2+) pocket.

The protein belongs to the HAD-like hydrolase superfamily. MasA/MtnC family. In terms of assembly, monomer. Requires Mg(2+) as cofactor.

Its subcellular location is the cytoplasm. The protein resides in the nucleus. The catalysed reaction is 5-methylsulfanyl-2,3-dioxopentyl phosphate + H2O = 1,2-dihydroxy-5-(methylsulfanyl)pent-1-en-3-one + phosphate. It participates in amino-acid biosynthesis; L-methionine biosynthesis via salvage pathway; L-methionine from S-methyl-5-thio-alpha-D-ribose 1-phosphate: step 3/6. Its pathway is amino-acid biosynthesis; L-methionine biosynthesis via salvage pathway; L-methionine from S-methyl-5-thio-alpha-D-ribose 1-phosphate: step 4/6. Bifunctional enzyme that catalyzes the enolization of 2,3-diketo-5-methylthiopentyl-1-phosphate (DK-MTP-1-P) into the intermediate 2-hydroxy-3-keto-5-methylthiopentenyl-1-phosphate (HK-MTPenyl-1-P), which is then dephosphorylated to form the acireductone 1,2-dihydroxy-3-keto-5-methylthiopentene (DHK-MTPene). The chain is Enolase-phosphatase E1 from Drosophila yakuba (Fruit fly).